A 387-amino-acid polypeptide reads, in one-letter code: MIVNIASPLYGSVQGFRRLDFSLYATVAILISVGIVMVASSSLDFAAERYHDTWFFVRKQITFLAMGLVGGLVILAVPMSVWNKYSGLLLILAFFLLMAVLIPGIGKVVNGSRRWLSLGPFSMQASEIAKFCLIVYFASYLARRNEELRTQWSGFLKLTAVLLIIVLLLLLEPDFGSSVVISATLGCMMFVAGVPLARFLLLAVSGVAGLALMAVASPYRWERLVAFMDPWATQFDSGYQLVQSLIAFGRGGWFGVGLGNSLQKLFFLPEAHTDFIFAIFTEEFGFIGAIALIGVFGFFLYRLVILFRRASEQEQFFSSYVVFGIGVMLAMQAFINMGVASGFLPTKGLTLPFISYGGSSLLITCGLMALVFRVNLELNRENQEGKP.

Helical transmembrane passes span 19–39 (LDFS…VMVA), 61–81 (ITFL…PMSV), 86–106 (SGLL…PGIG), 118–138 (LGPF…VYFA), 161–181 (VLLI…SVVI), 199–219 (FLLL…ASPY), 286–306 (FIGA…LVIL), 320–340 (YVVF…MGVA), and 352–372 (PFIS…ALVF).

Belongs to the SEDS family. FtsW subfamily.

It localises to the cell inner membrane. It carries out the reaction [GlcNAc-(1-&gt;4)-Mur2Ac(oyl-L-Ala-gamma-D-Glu-L-Lys-D-Ala-D-Ala)](n)-di-trans,octa-cis-undecaprenyl diphosphate + beta-D-GlcNAc-(1-&gt;4)-Mur2Ac(oyl-L-Ala-gamma-D-Glu-L-Lys-D-Ala-D-Ala)-di-trans,octa-cis-undecaprenyl diphosphate = [GlcNAc-(1-&gt;4)-Mur2Ac(oyl-L-Ala-gamma-D-Glu-L-Lys-D-Ala-D-Ala)](n+1)-di-trans,octa-cis-undecaprenyl diphosphate + di-trans,octa-cis-undecaprenyl diphosphate + H(+). It participates in cell wall biogenesis; peptidoglycan biosynthesis. In terms of biological role, peptidoglycan polymerase that is essential for cell division. The sequence is that of Probable peptidoglycan glycosyltransferase FtsW from Saccharophagus degradans (strain 2-40 / ATCC 43961 / DSM 17024).